We begin with the raw amino-acid sequence, 295 residues long: GTPase Era (295 aa).

One can recognise an Era-type G domain in the interval 5–172; it reads YCGYAAIIGR…EQAVHQLMPE (168 aa). A G1 region spans residues 13 to 20; that stretch reads GRPNVGKS. 13–20 provides a ligand contact to GTP; it reads GRPNVGKS. Residues 39–43 are G2; sequence QTTRY. A G3 region spans residues 60–63; it reads DTPG. GTP is bound by residues 60–64 and 121–124; these read DTPGL and NKVD. Positions 121–124 are G4; it reads NKVD. The G5 stretch occupies residues 151–153; the sequence is LSA. Residues 203–279 enclose the KH type-2 domain; it reads LGQEIPYSLA…FLQLWVKVKS (77 aa).

Belongs to the TRAFAC class TrmE-Era-EngA-EngB-Septin-like GTPase superfamily. Era GTPase family. In terms of assembly, monomer.

Its subcellular location is the cytoplasm. It is found in the cell inner membrane. In terms of biological role, an essential GTPase that binds both GDP and GTP, with rapid nucleotide exchange. Plays a role in 16S rRNA processing and 30S ribosomal subunit biogenesis and possibly also in cell cycle regulation and energy metabolism. The protein is GTPase Era of Coxiella burnetii (strain CbuK_Q154) (Coxiella burnetii (strain Q154)).